Reading from the N-terminus, the 208-residue chain is Large ribosomal subunit protein uL4 (208 aa).

Residues 58 to 77 (RGGGRKPWRQKGTGRARQGS) are disordered. Positions 60–71 (GGRKPWRQKGTG) are enriched in basic residues.

Belongs to the universal ribosomal protein uL4 family. In terms of assembly, part of the 50S ribosomal subunit.

Functionally, one of the primary rRNA binding proteins, this protein initially binds near the 5'-end of the 23S rRNA. It is important during the early stages of 50S assembly. It makes multiple contacts with different domains of the 23S rRNA in the assembled 50S subunit and ribosome. Forms part of the polypeptide exit tunnel. The chain is Large ribosomal subunit protein uL4 from Caldicellulosiruptor saccharolyticus (strain ATCC 43494 / DSM 8903 / Tp8T 6331).